The primary structure comprises 239 residues: Small ribosomal subunit protein uS2 (239 aa).

This sequence belongs to the universal ribosomal protein uS2 family.

This Francisella tularensis subsp. holarctica (strain FTNF002-00 / FTA) protein is Small ribosomal subunit protein uS2.